Here is a 250-residue protein sequence, read N- to C-terminus: UPF0524 protein C3orf70 (250 aa).

The interval 201 to 250 is disordered; it reads ESCDEDTEEGAELSSEEDYSPESSWEPDECTLLSPSQSDLEVIETIETTV. Positions 202 to 229 are enriched in acidic residues; sequence SCDEDTEEGAELSSEEDYSPESSWEPDE.

It belongs to the UPF0524 family.

In terms of biological role, may play a role in neuronal and neurobehavioral development. This Homo sapiens (Human) protein is UPF0524 protein C3orf70 (C3orf70).